Reading from the N-terminus, the 962-residue chain is Vacuolar membrane protease (962 aa).

Over 1–14 the chain is Cytoplasmic; that stretch reads MLAQFLRSLFRFRK. A helical membrane pass occupies residues 15–35; that stretch reads TTVSVLLVATYVVVFLLNVWD. At 36–359 the chain is on the vacuolar side; that stretch reads RIRYQYSLPE…FVTASTKDLF (324 aa). Asn-118 is a glycosylation site (N-linked (GlcNAc...) asparagine). Positions 153 and 165 each coordinate Zn(2+). Glu-197 acts as the Proton acceptor in catalysis. Residues Glu-198, Glu-223, and His-297 each coordinate Zn(2+). Residues 360–380 traverse the membrane as a helical segment; it reads TLNCVVLSVIPVIILVLEFVI. Over 381–390 the chain is Cytoplasmic; the sequence is QRRKTRERNP. Residues 391-411 traverse the membrane as a helical segment; sequence LLVWLRLPFSMFISYLVTATF. The Vacuolar portion of the chain corresponds to 412 to 431; the sequence is RSSLFRVNPLIFSRDYVSPT. A helical transmembrane segment spans residues 432–452; it reads IGFSFTFLILNYLVLSLLEYL. The Cytoplasmic portion of the chain corresponds to 453-460; the sequence is APSRDLKT. The helical transmembrane segment at 461–481 threads the bilayer; sequence VSFVELFFGMWIALLWATIRL. Over 482–489 the chain is Vacuolar; that stretch reads CTSKYTAT. Residues 490–510 form a helical membrane-spanning segment; that stretch reads GVYPITVLYLLMSFGAIVGLV. Residues 511-601 are Cytoplasmic-facing; sequence CSAFKRKHSV…VVSALNYDWS (91 aa). Residues 531–554 show a composition bias toward polar residues; that stretch reads APNTYSSIEESPQQATNTEAPNEN. Residues 531–563 are disordered; it reads APNTYSSIEESPQQATNTEAPNENSPEEHDERA. A helical transmembrane segment spans residues 602 to 622; that stretch reads VQFLAVVPLASFFVIMCLSLI. The Vacuolar portion of the chain corresponds to 623 to 639; it reads LDGIYQTCQEGFQATWN. Residue Asn-639 is glycosylated (N-linked (GlcNAc...) asparagine). The chain crosses the membrane as a helical span at residues 640–660; sequence VSKISMLGGMLLAIPVLPFCY. Residue Lys-661 is a topological domain, cytoplasmic. The helical transmembrane segment at 662–682 threads the bilayer; it reads LNYFVSMVLLFAAASAGIFSF. Residues 683–962 are Vacuolar-facing; the sequence is ERAPFTESSP…LVIVNDYIEL (280 aa). N-linked (GlcNAc...) asparagine glycans are attached at residues Asn-812 and Asn-839.

Belongs to the peptidase M28 family. Requires Zn(2+) as cofactor.

It localises to the vacuole membrane. May be involved in vacuolar sorting and osmoregulation. This chain is Vacuolar membrane protease, found in Lachancea thermotolerans (strain ATCC 56472 / CBS 6340 / NRRL Y-8284) (Yeast).